The following is a 122-amino-acid chain: Large ribosomal subunit protein bL12 (122 aa).

This sequence belongs to the bacterial ribosomal protein bL12 family. As to quaternary structure, homodimer. Part of the ribosomal stalk of the 50S ribosomal subunit. Forms a multimeric L10(L12)X complex, where L10 forms an elongated spine to which 2 to 4 L12 dimers bind in a sequential fashion. Binds GTP-bound translation factors.

Forms part of the ribosomal stalk which helps the ribosome interact with GTP-bound translation factors. Is thus essential for accurate translation. The sequence is that of Large ribosomal subunit protein bL12 from Glaesserella parasuis serovar 5 (strain SH0165) (Haemophilus parasuis).